The primary structure comprises 413 residues: Serine/threonine-protein phosphatase 7 (413 aa).

C28 and C67 form a disulfide bridge. Positions 84, 86, 113, and 145 each coordinate Mn(2+). The active-site Proton donor is H146. 2 residues coordinate Mn(2+): H197 and H303. Residues 391–413 (NVIDSDDEMDKSAMDTNNEQPNS) form a disordered region. A compositionally biased stretch (polar residues) spans 404–413 (MDTNNEQPNS).

Belongs to the PPP phosphatase family. PP-7 subfamily. As to quaternary structure, monomer, homodimer, and heteromer. Interacts with calmodulin (CaM3 and CaM4) and HSFA1A/HSF1. It depends on Mn(2+) as a cofactor. In terms of tissue distribution, expressed in leaves, and, to a lower extent, in stems and flowers.

It localises to the nucleus. It is found in the nucleoplasm. It catalyses the reaction O-phospho-L-seryl-[protein] + H2O = L-seryl-[protein] + phosphate. The enzyme catalyses O-phospho-L-threonyl-[protein] + H2O = L-threonyl-[protein] + phosphate. Inhibited by NaF and orthovanadate, as well as by divalent cations such as Ni(2+) and Zn(2+). Inhibited by polylysine with myelin basic protein as substrate, but activated by polylysine with pNPP as substrate. Reversibly regulated by redox agents. Inhibited by submillimolar Pi concentrations. Slightly repressed by calmodulin (CaM). Its function is as follows. Phosphatase active on para-nitrophenylphosphate (pNPP) and on various phosphoproteins such as myelin basic protein. Seems to act as a positive regulator of cryptochrome signaling involved in hypocotyl growth inhibition and cotyledon expansion under white and blue light conditions. Confers thermotolerance. Required for heat shock mediated-signaling pathway that leads to the expression of heat shock proteins (HSPs). This is Serine/threonine-protein phosphatase 7 (PP7) from Arabidopsis thaliana (Mouse-ear cress).